The following is a 359-amino-acid chain: Acyl-CoA Delta-9 desaturase (359 aa).

2 helical membrane-spanning segments follow: residues 51-71 (VILF…AFTS) and 74-94 (IATT…ITGG). Fe cation-binding residues include His-96, His-101, His-133, His-136, and His-137. A Histidine box-1 motif is present at residues 96–101 (HRLWAH). The Histidine box-2 motif lies at 133–137 (HRVHH). 2 helical membrane passes run 194 to 214 (YLIL…VYMW) and 222 to 244 (WFVA…NSAA). Fe cation-binding residues include His-245, His-274, His-277, and His-278. The short motif at 274-278 (HNYHH) is the Histidine box-3 element.

It belongs to the fatty acid desaturase type 1 family. Fe(2+) serves as cofactor.

It is found in the membrane. It carries out the reaction octadecanoyl-CoA + 2 Fe(II)-[cytochrome b5] + O2 + 2 H(+) = (9Z)-octadecenoyl-CoA + 2 Fe(III)-[cytochrome b5] + 2 H2O. It catalyses the reaction hexadecanoyl-CoA + 2 Fe(II)-[cytochrome b5] + O2 + 2 H(+) = (9Z)-hexadecenoyl-CoA + 2 Fe(III)-[cytochrome b5] + 2 H2O. Functionally, catalyzes the formation of a Delta9 double bond, acting on saturated fatty acyl substrates like palmitoyl-CoA (hexadecanoyl-CoA) and stearoyl-CoA (octadecanoyl-CoA) with higher desaturation activity on octadecanoyl-CoA than hexadecanoyl-CoA. This chain is Acyl-CoA Delta-9 desaturase, found in Acheta domesticus (House cricket).